The primary structure comprises 461 residues: MIKVGILDSTLREGEQTPGVIFTVDQRVEIAKALSDLGVSMIEAGHPAVSPDIYEGIKRIVKLKKEGIITSEIVGHSRAVKRDIEIAAELEVNRIAIFYGVSDLHLKAKHKATREEALRTIAETISYAKNHGVKVRFTAEDGSRTDFDFLVTVSKTARDAGADRVSIADTVGILYPSKTKELFSALTREVPNLEFDIHAHNDLGLAVANALAAIEGGATIIHATVNGLGERVGIVPLQQIAAAIKYHFGIEVVKLDKLQYVSSLVEKYSGIPMPPNYPITGDYAFLHKAGVHVAGVLNDPRTYEFMPPETFGRTRDYTIDKYTGKHALRDKYEKLGVKISDAEMDQILAKIKSNTTIRFYRDVDLLELAEEVTGRVLKPRPPEQIEALISVKCDSNVYTTSVTRRLSVINGVKEVMEISGDYDILVKVQAKDSNELNQIIESIRATKGVRSTLTSLVLKKM.

Residues 4–259 form the Pyruvate carboxyltransferase domain; it reads VGILDSTLRE…IEVVKLDKLQ (256 aa). Position 12 (Arg12) interacts with 2-oxoglutarate. Glu13 contacts Mg(2+). 2-oxoglutarate contacts are provided by His76, Arg136, and Thr170. 2 residues coordinate Mg(2+): His198 and His200. The Proton acceptor role is filled by His292.

The protein belongs to the alpha-IPM synthase/homocitrate synthase family. Homocitrate synthase LYS20/LYS21 subfamily. It depends on Mg(2+) as a cofactor. Requires Mn(2+) as cofactor.

The enzyme catalyses acetyl-CoA + 2-oxoglutarate + H2O = (2R)-homocitrate + CoA + H(+). Its pathway is amino-acid biosynthesis; L-lysine biosynthesis via AAA pathway; L-alpha-aminoadipate from 2-oxoglutarate: step 1/5. In terms of biological role, catalyzes the aldol-type condensation of 2-oxoglutarate with acetyl-CoA to yield homocitrate. Carries out the first step of the alpha-aminoadipate (AAA) lysine biosynthesis pathway. The polypeptide is Homocitrate synthase (Saccharolobus islandicus (strain L.S.2.15 / Lassen #1) (Sulfolobus islandicus)).